A 291-amino-acid chain; its full sequence is Nucleotide-binding protein lmo2474 (291 aa).

13 to 20 (GMSGAGKT) provides a ligand contact to ATP. Position 63 to 66 (63 to 66 (DLRG)) interacts with GTP.

The protein belongs to the RapZ-like family.

Its function is as follows. Displays ATPase and GTPase activities. In Listeria monocytogenes serovar 1/2a (strain ATCC BAA-679 / EGD-e), this protein is Nucleotide-binding protein lmo2474.